Here is a 264-residue protein sequence, read N- to C-terminus: Apolipoprotein A-I (264 aa).

The first 18 residues, 1-18 (MKAVVLAVAVLFLTGSQA), serve as a signal peptide directing secretion. A run of 2 repeats spans residues 67 to 88 (LKLL…ADLG) and 89 to 110 (PVTQ…QEMN). The segment at 67–264 (LKLLDNWDTL…DQATKQLTAQ (198 aa)) is 10 X approximate tandem repeats. M109 carries the post-translational modification Methionine sulfoxide. One copy of the 3; half-length repeat lies at 111–121 (KDLQEVKQKVQ). 5 repeat units span residues 122–143 (PYLD…EKVG), 144–165 (PLGT…EKLT), 166–187 (PLGE…TQLA), 188–207 (PYSD…LRDS), and 208–229 (TTFA…EKAK). Residues 230 to 240 (PALEDLRQGLL) form a 9; half-length repeat. Repeat 10 spans residues 241-264 (PVLESLKASILSSIDQATKQLTAQ).

Belongs to the apolipoprotein A1/A4/E family. Homodimer. Interacts with APOA1BP and CLU. Component of a sperm activating protein complex (SPAP), consisting of APOA1, an immunoglobulin heavy chain, an immunoglobulin light chain and albumin. Interacts with NDRG1. Interacts with SCGB3A2. Interacts with NAXE and YJEFN3. Post-translationally, glycosylated. In terms of processing, palmitoylated. Phosphorylation sites are present in the extracellular medium.

Its subcellular location is the secreted. Participates in the reverse transport of cholesterol from tissues to the liver for excretion by promoting cholesterol efflux from tissues and by acting as a cofactor for the lecithin cholesterol acyltransferase (LCAT). As part of the SPAP complex, activates spermatozoa motility. This chain is Apolipoprotein A-I (APOA1), found in Chinchilla lanigera (Long-tailed chinchilla).